The chain runs to 72 residues: Translation initiation factor IF-1 (72 aa).

The S1-like domain maps to 1-72 (MAKEENIEMQ…SKGRIIFRAR (72 aa)).

Belongs to the IF-1 family. As to quaternary structure, component of the 30S ribosomal translation pre-initiation complex which assembles on the 30S ribosome in the order IF-2 and IF-3, IF-1 and N-formylmethionyl-tRNA(fMet); mRNA recruitment can occur at any time during PIC assembly.

It is found in the cytoplasm. In terms of biological role, one of the essential components for the initiation of protein synthesis. Stabilizes the binding of IF-2 and IF-3 on the 30S subunit to which N-formylmethionyl-tRNA(fMet) subsequently binds. Helps modulate mRNA selection, yielding the 30S pre-initiation complex (PIC). Upon addition of the 50S ribosomal subunit IF-1, IF-2 and IF-3 are released leaving the mature 70S translation initiation complex. This is Translation initiation factor IF-1 from Colwellia psychrerythraea (strain 34H / ATCC BAA-681) (Vibrio psychroerythus).